The primary structure comprises 239 residues: Pyridoxal 5'-phosphate synthase subunit PdxS (239 aa).

A D-ribose 5-phosphate-binding site is contributed by D21. K78 serves as the catalytic Schiff-base intermediate with D-ribose 5-phosphate. Position 150 (G150) interacts with D-ribose 5-phosphate. Residue R162 coordinates D-glyceraldehyde 3-phosphate. Residues G211 and 232–233 (GS) contribute to the D-ribose 5-phosphate site.

Belongs to the PdxS/SNZ family. In terms of assembly, in the presence of PdxT, forms a dodecamer of heterodimers.

It carries out the reaction aldehydo-D-ribose 5-phosphate + D-glyceraldehyde 3-phosphate + L-glutamine = pyridoxal 5'-phosphate + L-glutamate + phosphate + 3 H2O + H(+). It functions in the pathway cofactor biosynthesis; pyridoxal 5'-phosphate biosynthesis. Its function is as follows. Catalyzes the formation of pyridoxal 5'-phosphate from ribose 5-phosphate (RBP), glyceraldehyde 3-phosphate (G3P) and ammonia. The ammonia is provided by the PdxT subunit. Can also use ribulose 5-phosphate and dihydroxyacetone phosphate as substrates, resulting from enzyme-catalyzed isomerization of RBP and G3P, respectively. The protein is Pyridoxal 5'-phosphate synthase subunit PdxS of Francisella tularensis.